The following is an 88-amino-acid chain: uncharacterized protein (88 aa).

This is an uncharacterized protein from Gracula (BFDV).